Here is a 147-residue protein sequence, read N- to C-terminus: Ponticulin-like protein C5 (147 aa).

Positions 1 to 20 (MKLNNSLLLLIVAIIASSNA) are cleaved as a signal peptide. The GPI-like-anchor amidated asparagine moiety is linked to residue asparagine 118. An N-linked (GlcNAc...) asparagine glycan is attached at asparagine 118. Residues 119 to 147 (SSESDSSDSTRIGASFALFALALLSMLAL) constitute a propeptide, removed in mature form.

The protein belongs to the ponticulin family. In terms of processing, the GPI-like-anchor contains a phosphoceramide group, rather than a phosphatidyl group.

Its subcellular location is the cell membrane. In Dictyostelium discoideum (Social amoeba), this protein is Ponticulin-like protein C5 (ponC5).